A 2530-amino-acid chain; its full sequence is Agglutinin-like protein 2 (2530 aa).

The signal sequence occupies residues 1–17; it reads MLLQFLLLSLCVSVATA. Intrachain disulfides connect cysteine 73–cysteine 150, cysteine 96–cysteine 112, cysteine 205–cysteine 297, and cysteine 227–cysteine 256. N-linked (GlcNAc...) asparagine glycosylation is found at asparagine 253 and asparagine 315. ALS repeat units lie at residues 364–395, 400–431, 437–468, 473–504, 509–540, and 545–576; these read TTITTSYVGVTTSYSTKTAPIGETATVIVDVP, TTVTSEWTGTITTTTTRTNPTDSIDTVVVQVP, VTTTEYWSQSYATTTTVTAPPGGTDSVIIREP, VTTTEYWSQSYATSSTVTAPPGGTDTVIIREP, and VTTTEYWSQSFATTTTITAPPGETDTVLIREP. N-linked (GlcNAc...) asparagine glycosylation is present at asparagine 578. The ALS 7 repeat unit spans residues 581 to 612; it reads VTTTEYWSQSYVTTSTITAPPGGTDTVIIREP. Residue asparagine 614 is glycosylated (N-linked (GlcNAc...) asparagine). ALS repeat units lie at residues 617 to 648, 653 to 684, 689 to 720, 725 to 756, 761 to 792, 797 to 828, and 833 to 864; these read VTTTEYWSQSYATTTTVTAPPGGTDTVIIREP, VTTTEYWSQSYATTTTVTGPPGGTDTVIIREP, and VTTTEYWSQSYATTTTVTAPPGGTATVIIREP. Asparagine 866 is a glycosylation site (N-linked (GlcNAc...) asparagine). 4 ALS repeats span residues 869–900, 905–936, 941–972, and 977–1008; these read VTTTEYWSQSYATTTTVTGPPGGTDTVIIREP and VTTTEYWSQSYATTTTVTAPPGGTATVIIREP. Residues 954–967 show a composition bias toward low complexity; that stretch reads TTTVTGPPGGTDTV. Residues 954 to 975 form a disordered region; the sequence is TTTVTGPPGGTDTVIIREPPNP. Asparagine 1010 is a glycosylation site (N-linked (GlcNAc...) asparagine). ALS repeat units lie at residues 1013 to 1044, 1049 to 1077, 1085 to 1116, and 1121 to 1152; these read VTTTEYWSQSYATTTTVTGPPGGTDTVIIREP, VTTTEYWSQSYATTTTVTAPPGGTATVII, and VTTTEYWSQSYATTTTVTAPPGGTATVIIREP. Asparagine 1154 is a glycosylation site (N-linked (GlcNAc...) asparagine). ALS repeat units follow at residues 1157–1188, 1193–1224, 1229–1260, 1265–1296, 1301–1332, and 1337–1368; these read VTTTEYWSQSYATTTTVTGPPGGTDTVIIREP, VTTTEYWSQSFATTTTVTAPPGGTDSVIIREP, VTTTEYWSQSYATTTTVTAPPGGTDSVIIREP, and VTTTEYWSQSYATTTTVTAPPGGTATVIIREP. Asparagine 1370 is a glycosylation site (N-linked (GlcNAc...) asparagine). One copy of the ALS 29 repeat lies at 1373-1404; it reads VTTTEYWSQSYATTTTVTAPPGGTATVIIREP. N-linked (GlcNAc...) asparagine glycosylation is present at asparagine 1406. Residues 1409-1440 form an ALS 30 repeat; sequence VTTTEYWSQSYATTTTITAPPGDTDTVIIREP. N-linked (GlcNAc...) asparagine glycosylation is present at asparagine 1442. 2 ALS repeats span residues 1445–1476 and 1481–1512; these read VTTTEYWSQSFATTTTVTAPPGGTDSVIIREP and VTTTEYWSQSYATTTTVTAPPGGTATVIIREP. Asparagine 1514 is a glycosylation site (N-linked (GlcNAc...) asparagine). An ALS 33 repeat occupies 1517 to 1548; that stretch reads VTTTEYWSQSYATTTTVTAPPGGTATVIIREP. Asparagine 1550 is a glycosylation site (N-linked (GlcNAc...) asparagine). One copy of the ALS 34 repeat lies at 1553 to 1584; sequence VTTTEYWSQSYATTTTITAPPGDTDTVIIREP. Residue asparagine 1586 is glycosylated (N-linked (GlcNAc...) asparagine). The stretch at 1589-1620 is one ALS 35 repeat; sequence VTTTEYWSQSYATTTTVTAPPGGTDTVIIREP. N-linked (GlcNAc...) asparagine glycosylation is present at asparagine 1622. An ALS 36 repeat occupies 1625-1656; that stretch reads VTTTEYWSQSYATTTTVTAPPGGTATVIIREP. Residue asparagine 1658 is glycosylated (N-linked (GlcNAc...) asparagine). 2 ALS repeats span residues 1661–1692 and 1697–1728; these read VTTTEYWSQSYATTTTVTGPPGSTDTVIIREP and VTTTEYWSQSYATTTTVTAPPGGTATVIIREP. Asparagine 1730 is a glycosylation site (N-linked (GlcNAc...) asparagine). An ALS 39 repeat occupies 1733–1764; the sequence is VTTTEYWSQSYATTTTVTAPPGGTDTVIIREP. An N-linked (GlcNAc...) asparagine glycan is attached at asparagine 1766. ALS repeat units lie at residues 1769–1800 and 1805–1836; these read VTTTEYWSQSYATTTTVTAPPGGTDTVIIREP and VTTTEYWSQSYATTTTVTAPPGGTATVIIREP. Asparagine 1838 carries an N-linked (GlcNAc...) asparagine glycan. ALS repeat units lie at residues 1841-1872 and 1877-1907; these read VTTTEYWSESYATTTTVTGPPGGTDVILIREP and VTTTEYWSESYATTTTITAPPGATDSVRIRE. Asparagine 1910 is a glycosylation site (N-linked (GlcNAc...) asparagine). ALS repeat units lie at residues 1913–1944 and 1949–1980; these read VTTTEYWSQSYATTTTVTAPPGGTDSVIIREP and VTTTEYWSQSYATTTTVTAPPGGTATVIIREP. Residue asparagine 1982 is glycosylated (N-linked (GlcNAc...) asparagine). 3 ALS repeats span residues 1985-2016, 2021-2052, and 2057-2088; these read VTTTEYWSQSYATTTTVTAPPGGTDTVIIREP and VTTTEYWSQSYATTTTVTAPPGGTATVIIREP. Residue asparagine 2090 is glycosylated (N-linked (GlcNAc...) asparagine). ALS repeat units follow at residues 2093-2124 and 2129-2157; these read VTTTEYWSQSYATTTTVTGPPGGTDTVIIREP and VTTTEYWSQSYATTLTITAPPGGTNSVII. The N-linked (GlcNAc...) asparagine glycan is linked to asparagine 2197. Disordered stretches follow at residues 2200–2235 and 2274–2494; these read VTHLPSSSSKPVDIPSSDVVTSTNDNSLTSLTGSEN and TTII…QQTT. Over residues 2204–2233 the composition is skewed to low complexity; that stretch reads PSSSSKPVDIPSSDVVTSTNDNSLTSLTGS. The N-linked (GlcNAc...) asparagine glycan is linked to asparagine 2281. Residues 2282-2296 show a composition bias toward low complexity; it reads GSGKSKSGELSSTGS. Polar residues-rich tracts occupy residues 2329–2420 and 2429–2452; these read STET…SATA and NGATTKGQDTAGGNSNGSTATTNI. 2 N-linked (GlcNAc...) asparagine glycosylation sites follow: asparagine 2444 and asparagine 2466. 2 stretches are compositionally biased toward low complexity: residues 2453 to 2471 and 2482 to 2494; these read QGGNNEPGNQPGTNTTGEP and SISQPTTLSQQTT. The GPI-anchor amidated aspartate moiety is linked to residue aspartate 2507. Residues 2508-2530 constitute a propeptide, removed in mature form; the sequence is GSGSIVQHSGWLYVLLTAISIFF.

Belongs to the ALS family. Post-translationally, N-glycosylated and O-glycosylated. In terms of processing, the GPI-anchor is attached to the protein in the endoplasmic reticulum and serves to target the protein to the cell surface. There, the glucosamine-inositol phospholipid moiety is cleaved off and the GPI-modified mannoprotein is covalently attached via its lipidless GPI glycan remnant to the 1,6-beta-glucan of the outer cell wall layer.

The protein localises to the cell membrane. It is found in the secreted. Its subcellular location is the cell wall. Cell surface adhesion protein which mediates both yeast-to-host tissue adherence and yeast aggregation. Plays an important role in the pathogenesis of C.albicans infections. In Candida albicans (strain SC5314 / ATCC MYA-2876) (Yeast), this protein is Agglutinin-like protein 2 (ALS2).